The primary structure comprises 84 residues: Dolichol phosphate-mannose biosynthesis regulatory protein (84 aa).

2 helical membrane passes run phenylalanine 11 to leucine 31 and tyrosine 49 to isoleucine 69.

This sequence belongs to the DPM2 family. In terms of assembly, component of the dolichol-phosphate mannose (DPM) synthase complex composed of DPM1, DPM2 and DPM3; in the complex interacts directly with DPM3. Component of the glycosylphosphatidylinositol-N-acetylglucosaminyltransferase (GPI-GnT) complex composed at least by PIGA, PIGC, PIGH, PIGP, PIGQ, PIGY and DPM2. Interacts with PIGA, PIGC and PIGQ.

It is found in the endoplasmic reticulum membrane. It participates in protein modification; protein glycosylation. Functionally, regulates the biosynthesis of dolichol phosphate-mannose. Regulatory subunit of the dolichol-phosphate mannose (DPM) synthase complex; essential for the ER localization and stable expression of DPM1. Part of the glycosylphosphatidylinositol-N-acetylglucosaminyltransferase (GPI-GnT) complex that catalyzes the transfer of N-acetylglucosamine from UDP-N-acetylglucosamine to phosphatidylinositol and participates in the first step of GPI biosynthesis. May act by regulating the GPI-GNT complex. This is Dolichol phosphate-mannose biosynthesis regulatory protein from Cricetulus griseus (Chinese hamster).